Consider the following 142-residue polypeptide: Large ribosomal subunit protein uL13 (142 aa).

Belongs to the universal ribosomal protein uL13 family. In terms of assembly, part of the 50S ribosomal subunit.

In terms of biological role, this protein is one of the early assembly proteins of the 50S ribosomal subunit, although it is not seen to bind rRNA by itself. It is important during the early stages of 50S assembly. The chain is Large ribosomal subunit protein uL13 from Psychrobacter arcticus (strain DSM 17307 / VKM B-2377 / 273-4).